Consider the following 240-residue polypeptide: Methylthioribulose-1-phosphate dehydratase (240 aa).

Cys100 is a substrate binding site. 2 residues coordinate Zn(2+): His117 and His119. Glu146 serves as the catalytic Proton donor/acceptor. His202 lines the Zn(2+) pocket.

It belongs to the aldolase class II family. MtnB subfamily. Zn(2+) serves as cofactor.

The protein localises to the cytoplasm. The catalysed reaction is 5-(methylsulfanyl)-D-ribulose 1-phosphate = 5-methylsulfanyl-2,3-dioxopentyl phosphate + H2O. It functions in the pathway amino-acid biosynthesis; L-methionine biosynthesis via salvage pathway; L-methionine from S-methyl-5-thio-alpha-D-ribose 1-phosphate: step 2/6. Its function is as follows. Catalyzes the dehydration of methylthioribulose-1-phosphate (MTRu-1-P) into 2,3-diketo-5-methylthiopentyl-1-phosphate (DK-MTP-1-P). This Emericella nidulans (strain FGSC A4 / ATCC 38163 / CBS 112.46 / NRRL 194 / M139) (Aspergillus nidulans) protein is Methylthioribulose-1-phosphate dehydratase.